Here is a 406-residue protein sequence, read N- to C-terminus: Protein phosphatase 2C (406 aa).

The PPM-type phosphatase domain occupies 23 to 274 (RCGSNCVNGY…DNISCMIVQF (252 aa)). Mn(2+)-binding residues include aspartate 55, glycine 56, aspartate 221, and aspartate 265.

It belongs to the PP2C family. Monomer. Mg(2+) is required as a cofactor. The cofactor is Mn(2+).

It catalyses the reaction O-phospho-L-seryl-[protein] + H2O = L-seryl-[protein] + phosphate. It carries out the reaction O-phospho-L-threonyl-[protein] + H2O = L-threonyl-[protein] + phosphate. Enzyme with a broad specificity. This is Protein phosphatase 2C from Leishmania chagasi.